We begin with the raw amino-acid sequence, 486 residues long: Membrane-bound lytic murein transglycosylase F (486 aa).

Residues 1 to 29 (MFSPTALRPRYAKWLIATGLFLMLSGCVD) form the signal peptide. The interval 30–267 (KPNTLERVKE…RLKDRYYGHV (238 aa)) is non-LT domain. The interval 268-486 (DVLGYMGATT…SKPAQEPAPL (219 aa)) is LT domain. Residue Glu314 is part of the active site.

It in the N-terminal section; belongs to the bacterial solute-binding protein 3 family. The protein in the C-terminal section; belongs to the transglycosylase Slt family.

The protein localises to the cell outer membrane. The enzyme catalyses Exolytic cleavage of the (1-&gt;4)-beta-glycosidic linkage between N-acetylmuramic acid (MurNAc) and N-acetylglucosamine (GlcNAc) residues in peptidoglycan, from either the reducing or the non-reducing ends of the peptidoglycan chains, with concomitant formation of a 1,6-anhydrobond in the MurNAc residue.. Its function is as follows. Murein-degrading enzyme that degrades murein glycan strands and insoluble, high-molecular weight murein sacculi, with the concomitant formation of a 1,6-anhydromuramoyl product. Lytic transglycosylases (LTs) play an integral role in the metabolism of the peptidoglycan (PG) sacculus. Their lytic action creates space within the PG sacculus to allow for its expansion as well as for the insertion of various structures such as secretion systems and flagella. This chain is Membrane-bound lytic murein transglycosylase F, found in Pseudomonas fluorescens (strain Pf0-1).